Consider the following 827-residue polypeptide: Cytosolic Fe-S cluster assembly factor NAR1 (827 aa).

A [4Fe-4S] cluster-binding site is contributed by Cys22. The segment at 57–77 (AYYESSTPPSSSLSAADSRPR) is disordered. Residues 61–73 (SSTPPSSSLSAAD) are compositionally biased toward low complexity. The [4Fe-4S] cluster site is built by Cys92, Cys95, and Cys98. A disordered region spans residues 209 to 231 (RENARKRAKLSNAPADDDDRLHP). Residues Cys246, Cys307, Cys591, and Cys595 each contribute to the [4Fe-4S] cluster site. Disordered stretches follow at residues 599–637 (GGQIRPPTQSDVDVTRSSTTVDNHATDPEGYTKGGWAAD) and 709–739 (DQGGANDSGSSTPTLVGSGANTPLSSSNAKS). Polar residues-rich tracts occupy residues 604–621 (PPTQSDVDVTRSSTTVDN) and 713–738 (ANDSGSSTPTLVGSGANTPLSSSNAK).

This sequence belongs to the NARF family.

Functionally, component of the cytosolic Fe/S protein assembly machinery. Required for maturation of extramitochondrial Fe/S proteins. May play a role in the transfer of pre-assembled Fe/S clusters to target apoproteins. The protein is Cytosolic Fe-S cluster assembly factor NAR1 (NAR1) of Mycosarcoma maydis (Corn smut fungus).